We begin with the raw amino-acid sequence, 279 residues long: Ribosomal RNA small subunit methyltransferase J (279 aa).

S-adenosyl-L-methionine is bound by residues 138–139 and D194; that span reads ER.

Belongs to the methyltransferase superfamily. RsmJ family.

The protein resides in the cytoplasm. It catalyses the reaction guanosine(1516) in 16S rRNA + S-adenosyl-L-methionine = N(2)-methylguanosine(1516) in 16S rRNA + S-adenosyl-L-homocysteine + H(+). In terms of biological role, specifically methylates the guanosine in position 1516 of 16S rRNA. This chain is Ribosomal RNA small subunit methyltransferase J, found in Acinetobacter baumannii (strain ACICU).